Here is a 205-residue protein sequence, read N- to C-terminus: Ribonuclease HII (205 aa).

Positions 14 to 201 (EIIAGVDEAG…KGNINHSAIL (188 aa)) constitute an RNase H type-2 domain. A divalent metal cation contacts are provided by Asp20, Glu21, and Asp111.

The protein belongs to the RNase HII family. Mn(2+) is required as a cofactor. It depends on Mg(2+) as a cofactor.

Its subcellular location is the cytoplasm. The enzyme catalyses Endonucleolytic cleavage to 5'-phosphomonoester.. Endonuclease that specifically degrades the RNA of RNA-DNA hybrids. This chain is Ribonuclease HII, found in Orientia tsutsugamushi (strain Ikeda) (Rickettsia tsutsugamushi).